The chain runs to 105 residues: Biogenesis of lysosome-related organelles complex 1 subunit SNN1 (105 aa).

A coiled-coil region spans residues 70 to 105 (WKDDNERLDSLRKRVDSLKSRFQSLKLRSDKLEQRE).

The protein belongs to the SNAPIN family. As to quaternary structure, component of the biogenesis of lysosome-related organelles complex-1 (BLOC-1).

It localises to the endosome. Functionally, component of the biogenesis of lysosome-related organelles complex-1 (BLOC-1), a complex involved in endosomal cargo sorting. The protein is Biogenesis of lysosome-related organelles complex 1 subunit SNN1 (SNN1) of Zygosaccharomyces rouxii (strain ATCC 2623 / CBS 732 / NBRC 1130 / NCYC 568 / NRRL Y-229).